Here is a 72-residue protein sequence, read N- to C-terminus: Translation initiation factor IF-1 (72 aa).

The region spanning 1–72 (MAKEDSIEMQ…SKGRIVFRSR (72 aa)) is the S1-like domain.

Belongs to the IF-1 family. In terms of assembly, component of the 30S ribosomal translation pre-initiation complex which assembles on the 30S ribosome in the order IF-2 and IF-3, IF-1 and N-formylmethionyl-tRNA(fMet); mRNA recruitment can occur at any time during PIC assembly.

The protein localises to the cytoplasm. Its function is as follows. One of the essential components for the initiation of protein synthesis. Stabilizes the binding of IF-2 and IF-3 on the 30S subunit to which N-formylmethionyl-tRNA(fMet) subsequently binds. Helps modulate mRNA selection, yielding the 30S pre-initiation complex (PIC). Upon addition of the 50S ribosomal subunit IF-1, IF-2 and IF-3 are released leaving the mature 70S translation initiation complex. This is Translation initiation factor IF-1 from Aeromonas hydrophila subsp. hydrophila (strain ATCC 7966 / DSM 30187 / BCRC 13018 / CCUG 14551 / JCM 1027 / KCTC 2358 / NCIMB 9240 / NCTC 8049).